The primary structure comprises 213 residues: Large ribosomal subunit protein eL14 (213 aa).

N6-acetyllysine is present on Lys79. Lys85 bears the N6-acetyllysine; alternate mark. Lys85 carries the N6-succinyllysine; alternate modification. A Glycyl lysine isopeptide (Lys-Gly) (interchain with G-Cter in SUMO2) cross-link involves residue Lys124. Residue Ser139 is modified to Phosphoserine. The tract at residues 166–213 (TAGKKAPAQKAPAQKAAGQKAAPPPKAQKVQKPPAQKAPAPKASGEKA) is disordered. One copy of the 1-1; approximate repeat lies at 169-173 (KKAPA). The segment at 169-188 (KKAPAQKAPAQKAAGQKAAP) is 4 X 5 AA tandem repeats of Q-K-A-[APS]-X. 5 repeat units span residues 174–178 (QKAPA), 179–183 (QKAAG), 184–188 (QKAAP), 191–193 (KAQ), and 194–196 (KVQ). Positions 191-196 (KAQKVQ) are 2 X 3 AA tandem repeats of K-G-Q. Lys202 carries the post-translational modification N6-succinyllysine.

It belongs to the eukaryotic ribosomal protein eL14 family. Component of the large ribosomal subunit.

The protein resides in the cytoplasm. In terms of biological role, component of the large ribosomal subunit. The ribosome is a large ribonucleoprotein complex responsible for the synthesis of proteins in the cell. The sequence is that of Large ribosomal subunit protein eL14 (RPL14) from Sus scrofa (Pig).